The primary structure comprises 237 residues: UPF0688 protein C1orf174 homolog (237 aa).

Residues 1 to 187 (MRSRKLAGGV…LLDDDSNQPM (187 aa)) form a disordered region. A compositionally biased stretch (low complexity) spans 11-28 (RSSARLRARSCSAASASA). A compositionally biased stretch (polar residues) spans 29 to 47 (QDTHVTTSAQTACQTPSSH). A compositionally biased stretch (basic and acidic residues) spans 48–76 (KATDRRTSKKFKYDKGHIVKSELQKHRSD). Serine 183 bears the Phosphoserine mark.

Belongs to the UPF0688 family.

The protein localises to the nucleus. The polypeptide is UPF0688 protein C1orf174 homolog (Bos taurus (Bovine)).